We begin with the raw amino-acid sequence, 291 residues long: m-AAA protease-interacting protein 1, mitochondrial (291 aa).

A mitochondrion-targeting transit peptide spans 1–96 (MALAARLLPL…SLPASPIRSY (96 aa)).

As to quaternary structure, interacts with AFG3L2. Interacts with SPG7. Interacts with SMDT1/EMRE (via the N-terminal transit peptide); interaction is direct and takes place before maturation of SMDT1/EMRE.

It is found in the mitochondrion matrix. Its function is as follows. Promotes sorting of SMDT1/EMRE in mitochondria by ensuring its maturation. Interacts with the transit peptide region of SMDT1/EMRE precursor protein in the mitochondrial matrix, leading to protect it against protein degradation by YME1L1, thereby ensuring SMDT1/EMRE maturation by the mitochondrial processing peptidase (PMPCA and PMPCB). This Rattus norvegicus (Rat) protein is m-AAA protease-interacting protein 1, mitochondrial.